Consider the following 140-residue polypeptide: Iron sulfur cluster assembly protein 1 (140 aa).

This sequence belongs to the NifU family. In terms of assembly, component of the core Fe-S cluster (ISC) assembly machinery. It depends on [2Fe-2S] cluster as a cofactor.

The protein resides in the mitosome matrix. The protein operates within cofactor biosynthesis; iron-sulfur cluster biosynthesis. Its function is as follows. Scaffold protein for the de novo synthesis of iron-sulfur (Fe-S) clusters within mitosomes, which is required for maturation of both [2Fe-2S] and [4Fe-4S] proteins. First, a [2Fe-2S] cluster is transiently assembled on the scaffold protein ISU1. In a second step, the cluster is released from ISU1, transferred to a glutaredoxin, followed by the formation of [2Fe-2S] proteins, the synthesis of [4Fe-4S] clusters and their target-specific insertion into the recipient apoproteins. Cluster assembly on ISU1 depends on the function of the cysteine desulfurase complex NFS1-ISD11, which serves as the sulfur donor for cluster synthesis, the iron-binding protein frataxin as the putative iron donor, and the electron transfer chain comprised of ferredoxin reductase and ferredoxin, which receive their electrons from NADH. This is Iron sulfur cluster assembly protein 1 (ISU1) from Encephalitozoon cuniculi (strain GB-M1) (Microsporidian parasite).